The chain runs to 727 residues: Putative inactive disease susceptibility protein LOV1 (727 aa).

Positions 44–336 (EQSVEALAGH…AAEGIITSSD (293 aa)) constitute an NB-ARC domain. 5 LRR repeats span residues 459-484 (LPLL…IGDL), 485-507 (IHLR…LRNL), 509-530 (LLLY…LKEM), 575-600 (MTKL…LGQL), and 601-626 (RSLE…IVLN).

This sequence belongs to the disease resistance NB-LRR family. RPP8/HRT subfamily.

The protein is Putative inactive disease susceptibility protein LOV1 (LOV1) of Arabidopsis thaliana (Mouse-ear cress).